A 189-amino-acid polypeptide reads, in one-letter code: Parkinson disease protein 7 homolog (189 aa).

A2 carries the N-acetylalanine modification. Residues C46 and C53 are each lipidated (S-palmitoyl cysteine). Y67 is modified (phosphotyrosine). C106 acts as the Nucleophile in catalysis. C106 carries the post-translational modification Cysteine sulfinic acid (-SO2H); alternate. C106 carries S-palmitoyl cysteine; alternate lipidation. H126 is a catalytic residue. K130 participates in a covalent cross-link: Glycyl lysine isopeptide (Lys-Gly) (interchain with G-Cter in SUMO). K148 bears the N6-acetyllysine mark. K182 is modified (N6-succinyllysine).

Belongs to the peptidase C56 family. As to quaternary structure, homodimer. Binds EFCAB6/DJBP and PIAS2. Part of a ternary complex containing PARK7, EFCAB6/DJBP and AR. Binds to HIPK1. Interacts (via N-terminus) with OTUD7B. Interacts with BBS1, CLCF1 and MTERF. Interacts (via C-terminus) with NCF1; the interaction is enhanced by LPS and modulates NCF1 phosphorylation and membrane translocation. Interacts with NENF. Requires Deglycase activity does not require glutathione as a cofactor, however, glycated glutathione constitutes a PARK7 substrate. as cofactor. Sumoylated on Lys-130 by PIAS2 or PIAS4; which is essential for cell-growth promoting activity and transforming activity. Post-translationally, undergoes cleavage of a C-terminal peptide and subsequent activation of protease activity in response to oxidative stress. In terms of tissue distribution, expressed in erythroblasts and in mature red blood cells from peripheral blood (at protein level). In pancreas, expression is higher in islets than surrounding exocrine tissues.

Its subcellular location is the cell membrane. It is found in the cytoplasm. The protein localises to the membrane raft. The protein resides in the nucleus. It localises to the mitochondrion. Its subcellular location is the endoplasmic reticulum. The catalysed reaction is N(omega)-(1-hydroxy-2-oxopropyl)-L-arginyl-[protein] + H2O = lactate + L-arginyl-[protein] + H(+). It carries out the reaction N(6)-(1-hydroxy-2-oxopropyl)-L-lysyl-[protein] + H2O = lactate + L-lysyl-[protein] + H(+). It catalyses the reaction S-(1-hydroxy-2-oxopropyl)-L-cysteinyl-[protein] + H2O = lactate + L-cysteinyl-[protein] + H(+). The enzyme catalyses N(omega)-(1-hydroxy-2-oxoethyl)-L-arginyl-[protein] + H2O = L-arginyl-[protein] + glycolate + H(+). The catalysed reaction is N(6)-(1-hydroxy-2-oxoethyl)-L-lysyl-[protein] + H2O = glycolate + L-lysyl-[protein] + H(+). It carries out the reaction S-(1-hydroxy-2-oxoethyl)-L-cysteinyl-[protein] + H2O = glycolate + L-cysteinyl-[protein] + H(+). It catalyses the reaction N(2)-(1-hydroxy-2-oxopropyl)-dGTP + H2O = lactate + dGTP + H(+). The enzyme catalyses N(2)-(1-hydroxy-2-oxopropyl)-GTP + H2O = lactate + GTP + H(+). The catalysed reaction is N(2)-(1-hydroxy-2-oxopropyl)-GDP + H2O = lactate + GDP + H(+). It carries out the reaction N(2)-(1-hydroxy-2-oxopropyl)-GMP + H2O = lactate + GMP + H(+). It catalyses the reaction N(2)-(1-hydroxy-2-oxoethyl)-dGTP + H2O = dGTP + glycolate + H(+). The enzyme catalyses N(2)-(1-hydroxy-2-oxoethyl)-GTP + H2O = glycolate + GTP + H(+). The catalysed reaction is N(2)-(1-hydroxy-2-oxoethyl)-GDP + H2O = glycolate + GDP + H(+). It carries out the reaction N(2)-(1-hydroxy-2-oxoethyl)-GMP + H2O = glycolate + GMP + H(+). It catalyses the reaction an N(2)-(1-hydroxy-2-oxopropyl)-guanosine in RNA + H2O = a guanosine in RNA + lactate + H(+). The enzyme catalyses an N(2)-(1-hydroxy-2-oxopropyl)-2'-deoxyguanosine in DNA + H2O = a 2'-deoxyguanosine in DNA + lactate + H(+). The catalysed reaction is an N(2)-(1-hydroxy-2-oxoethyl)-guanosine in RNA + H2O = a guanosine in RNA + glycolate + H(+). It carries out the reaction an N(2)-(1-hydroxy-2-oxoethyl)-2'-deoxyguanosine in DNA + H2O = a 2'-deoxyguanosine in DNA + glycolate + H(+). Its function is as follows. Multifunctional protein with controversial molecular function which plays an important role in cell protection against oxidative stress and cell death acting as oxidative stress sensor and redox-sensitive chaperone and protease. It is involved in neuroprotective mechanisms like the stabilization of NFE2L2 and PINK1 proteins, male fertility as a positive regulator of androgen signaling pathway as well as cell growth and transformation through, for instance, the modulation of NF-kappa-B signaling pathway. Has been described as a protein and nucleotide deglycase that catalyzes the deglycation of the Maillard adducts formed between amino groups of proteins or nucleotides and reactive carbonyl groups of glyoxals. But this function is rebuted by other works. As a protein deglycase, repairs methylglyoxal- and glyoxal-glycated proteins, and releases repaired proteins and lactate or glycolate, respectively. Deglycates cysteine, arginine and lysine residues in proteins, and thus reactivates these proteins by reversing glycation by glyoxals. Acts on early glycation intermediates (hemithioacetals and aminocarbinols), preventing the formation of advanced glycation endproducts (AGE) that cause irreversible damage. Also functions as a nucleotide deglycase able to repair glycated guanine in the free nucleotide pool (GTP, GDP, GMP, dGTP) and in DNA and RNA. Is thus involved in a major nucleotide repair system named guanine glycation repair (GG repair), dedicated to reversing methylglyoxal and glyoxal damage via nucleotide sanitization and direct nucleic acid repair. Protects histones from adduction by methylglyoxal, controls the levels of methylglyoxal-derived argininine modifications on chromatin. Able to remove the glycations and restore histone 3, histone glycation disrupts both local and global chromatin architecture by altering histone-DNA interactions as well as histone acetylation and ubiquitination levels. Displays a very low glyoxalase activity that may reflect its deglycase activity. Eliminates hydrogen peroxide and protects cells against hydrogen peroxide-induced cell death. Required for correct mitochondrial morphology and function as well as for autophagy of dysfunctional mitochondria. Plays a role in regulating expression or stability of the mitochondrial uncoupling proteins SLC25A14 and SLC25A27 in dopaminergic neurons of the substantia nigra pars compacta and attenuates the oxidative stress induced by calcium entry into the neurons via L-type channels during pacemaking. Regulates astrocyte inflammatory responses, may modulate lipid rafts-dependent endocytosis in astrocytes and neuronal cells. In pancreatic islets, involved in the maintenance of mitochondrial reactive oxygen species (ROS) levels and glucose homeostasis in an age- and diet dependent manner. Protects pancreatic beta cells from cell death induced by inflammatory and cytotoxic setting. Binds to a number of mRNAs containing multiple copies of GG or CC motifs and partially inhibits their translation but dissociates following oxidative stress. Metal-binding protein able to bind copper as well as toxic mercury ions, enhances the cell protection mechanism against induced metal toxicity. In macrophages, interacts with the NADPH oxidase subunit NCF1 to direct NADPH oxidase-dependent ROS production, and protects against sepsis. The polypeptide is Parkinson disease protein 7 homolog (Mus musculus (Mouse)).